Reading from the N-terminus, the 432-residue chain is Enolase 1 (432 aa).

A (2R)-2-phosphoglycerate-binding site is contributed by glutamine 163. The active-site Proton donor is the glutamate 205. The Mg(2+) site is built by aspartate 242, glutamate 287, and aspartate 314. (2R)-2-phosphoglycerate-binding residues include lysine 339, arginine 368, serine 369, and lysine 390. Residue lysine 339 is the Proton acceptor of the active site.

The protein belongs to the enolase family. It depends on Mg(2+) as a cofactor.

It is found in the cytoplasm. It localises to the secreted. The protein localises to the cell surface. The enzyme catalyses (2R)-2-phosphoglycerate = phosphoenolpyruvate + H2O. It participates in carbohydrate degradation; glycolysis; pyruvate from D-glyceraldehyde 3-phosphate: step 4/5. Its function is as follows. Catalyzes the reversible conversion of 2-phosphoglycerate (2-PG) into phosphoenolpyruvate (PEP). It is essential for the degradation of carbohydrates via glycolysis. In Lactobacillus johnsonii (strain CNCM I-12250 / La1 / NCC 533), this protein is Enolase 1.